Consider the following 444-residue polypeptide: L-cysteine:1D-myo-inositol 2-amino-2-deoxy-alpha-D-glucopyranoside ligase (444 aa).

A compositionally biased stretch (basic and acidic residues) spans 1-13; the sequence is MPCDRKTSPDQHH. Residues 1–21 form a disordered region; the sequence is MPCDRKTSPDQHHALQIHRHH. Cysteine 75 contacts Zn(2+). Residues 75 to 78, threonine 90, and 113 to 115 each bind L-cysteinyl-5'-AMP; these read CGIT and NIT. The 'HIGH' region signature appears at 77–87; sequence ITPYDATHLGH. Positions 219-224 match the 'ERGGDP' region motif; sequence ERGGDP. Residue tryptophan 259 coordinates L-cysteinyl-5'-AMP. Residue cysteine 263 coordinates Zn(2+). 281-283 provides a ligand contact to L-cysteinyl-5'-AMP; it reads GSD. Histidine 288 serves as a coordination point for Zn(2+). Position 315 (isoleucine 315) interacts with L-cysteinyl-5'-AMP. The 'KMSKS' region signature appears at 321-325; sequence KMSKS.

This sequence belongs to the class-I aminoacyl-tRNA synthetase family. MshC subfamily. In terms of assembly, monomer. The cofactor is Zn(2+).

The enzyme catalyses 1D-myo-inositol 2-amino-2-deoxy-alpha-D-glucopyranoside + L-cysteine + ATP = 1D-myo-inositol 2-(L-cysteinylamino)-2-deoxy-alpha-D-glucopyranoside + AMP + diphosphate + H(+). Catalyzes the ATP-dependent condensation of GlcN-Ins and L-cysteine to form L-Cys-GlcN-Ins. The polypeptide is L-cysteine:1D-myo-inositol 2-amino-2-deoxy-alpha-D-glucopyranoside ligase (Mycolicibacterium gilvum (strain PYR-GCK) (Mycobacterium gilvum (strain PYR-GCK))).